Consider the following 343-residue polypeptide: tRNA N6-adenosine threonylcarbamoyltransferase (343 aa).

Fe cation-binding residues include His-120 and His-124. Substrate-binding positions include 142–146 (VVSGG), Asp-175, Gly-188, Asp-192, and Asn-281. A Fe cation-binding site is contributed by Asp-309.

Belongs to the KAE1 / TsaD family. Fe(2+) serves as cofactor.

It localises to the cytoplasm. It catalyses the reaction L-threonylcarbamoyladenylate + adenosine(37) in tRNA = N(6)-L-threonylcarbamoyladenosine(37) in tRNA + AMP + H(+). Functionally, required for the formation of a threonylcarbamoyl group on adenosine at position 37 (t(6)A37) in tRNAs that read codons beginning with adenine. Is involved in the transfer of the threonylcarbamoyl moiety of threonylcarbamoyl-AMP (TC-AMP) to the N6 group of A37, together with TsaE and TsaB. TsaD likely plays a direct catalytic role in this reaction. This Halalkalibacterium halodurans (strain ATCC BAA-125 / DSM 18197 / FERM 7344 / JCM 9153 / C-125) (Bacillus halodurans) protein is tRNA N6-adenosine threonylcarbamoyltransferase.